Here is a 430-residue protein sequence, read N- to C-terminus: 3-phosphoshikimate 1-carboxyvinyltransferase (430 aa).

Positions 1-20 are disordered; that stretch reads MHATVSPSRVRGRARAPPSK. Residues K20, S21, and R25 each coordinate 3-phosphoshikimate. Position 20 (K20) interacts with phosphoenolpyruvate. 2 residues coordinate phosphoenolpyruvate: G91 and R119. Residues S164, S165, Q166, S192, D312, and K339 each contribute to the 3-phosphoshikimate site. Residue Q166 participates in phosphoenolpyruvate binding. The Proton acceptor role is filled by D312. 2 residues coordinate phosphoenolpyruvate: R343 and R386.

This sequence belongs to the EPSP synthase family. In terms of assembly, monomer.

The protein resides in the cytoplasm. It catalyses the reaction 3-phosphoshikimate + phosphoenolpyruvate = 5-O-(1-carboxyvinyl)-3-phosphoshikimate + phosphate. It participates in metabolic intermediate biosynthesis; chorismate biosynthesis. Catalyzes the transfer of the enolpyruvyl moiety of phosphoenolpyruvate (PEP) to the 5-hydroxyl of shikimate-3-phosphate (S3P) to produce enolpyruvyl shikimate-3-phosphate and inorganic phosphate. In Halobacterium salinarum (strain ATCC 29341 / DSM 671 / R1), this protein is 3-phosphoshikimate 1-carboxyvinyltransferase.